The chain runs to 354 residues: Elongation factor Ts, mitochondrial (354 aa).

A mitochondrion-targeting transit peptide spans 1 to 47 (MMRSTLSLLQKCRLPNNNGSLLSFKNNQVVNQTALFSMKSNQQYRFY).

This sequence belongs to the EF-Ts family.

It is found in the mitochondrion. In terms of biological role, associates with the EF-Tu.GDP complex and induces the exchange of GDP to GTP. It remains bound to the aminoacyl-tRNA.EF-Tu.GTP complex up to the GTP hydrolysis stage on the ribosome. In Heterostelium pallidum (strain ATCC 26659 / Pp 5 / PN500) (Cellular slime mold), this protein is Elongation factor Ts, mitochondrial (tsfm).